A 394-amino-acid polypeptide reads, in one-letter code: Elongation factor Tu 2 (394 aa).

A tr-type G domain is found at 9–204; it reads KPHCNIGTIG…SIDDYIPQPT (196 aa). The G1 stretch occupies residues 18-25; that stretch reads GHVDHGKT. Residue 18–25 participates in GTP binding; it reads GHVDHGKT. Threonine 25 provides a ligand contact to Mg(2+). A G2 region spans residues 61-65; it reads GITIQ. The interval 82–85 is G3; that stretch reads DCPG. GTP is bound by residues 82 to 86 and 137 to 140; these read DCPGH and NKID. A G4 region spans residues 137–140; that stretch reads NKID. The tract at residues 174–176 is G5; sequence SAL.

It belongs to the TRAFAC class translation factor GTPase superfamily. Classic translation factor GTPase family. EF-Tu/EF-1A subfamily. Monomer.

It localises to the cytoplasm. It catalyses the reaction GTP + H2O = GDP + phosphate + H(+). Functionally, GTP hydrolase that promotes the GTP-dependent binding of aminoacyl-tRNA to the A-site of ribosomes during protein biosynthesis. This is Elongation factor Tu 2 from Orientia tsutsugamushi (strain Boryong) (Rickettsia tsutsugamushi).